Here is a 120-residue protein sequence, read N- to C-terminus: Aspartate 1-decarboxylase (120 aa).

Catalysis depends on S25, which acts as the Schiff-base intermediate with substrate; via pyruvic acid. S25 is subject to Pyruvic acid (Ser). Position 57 (T57) interacts with substrate. Y58 functions as the Proton donor in the catalytic mechanism. 73–75 (GAA) is a binding site for substrate.

The protein belongs to the PanD family. As to quaternary structure, heterooctamer of four alpha and four beta subunits. The cofactor is pyruvate. In terms of processing, is synthesized initially as an inactive proenzyme, which is activated by self-cleavage at a specific serine bond to produce a beta-subunit with a hydroxyl group at its C-terminus and an alpha-subunit with a pyruvoyl group at its N-terminus.

The protein resides in the cytoplasm. The catalysed reaction is L-aspartate + H(+) = beta-alanine + CO2. Its pathway is cofactor biosynthesis; (R)-pantothenate biosynthesis; beta-alanine from L-aspartate: step 1/1. Functionally, catalyzes the pyruvoyl-dependent decarboxylation of aspartate to produce beta-alanine. The chain is Aspartate 1-decarboxylase from Deinococcus radiodurans (strain ATCC 13939 / DSM 20539 / JCM 16871 / CCUG 27074 / LMG 4051 / NBRC 15346 / NCIMB 9279 / VKM B-1422 / R1).